Consider the following 369-residue polypeptide: N-succinyl-L-Arg/Lys racemase (369 aa).

Substrate-binding positions include tyrosine 26, aspartate 51, 161–163, and 191–193; these read KMK and DVN. 3 residues coordinate Mg(2+): aspartate 191, glutamate 218, and aspartate 243. Substrate-binding positions include lysine 267, 295-296, and 320-322; these read SM and ELT.

It belongs to the mandelate racemase/muconate lactonizing enzyme family. Mg(2+) serves as cofactor.

Its function is as follows. Catalyzes efficient racemization of N-succinyl-L-Arg and N-succinyl-L-Lys, suggesting that these are physiological substrates of this enzyme. Has low activity with L-Asp-L-Lys, and even lower activity with L-Leu-L-Arg, L-Leu-L-Lys, N-succinyl-L-His and N-succinyl-L-Met (in vitro). The polypeptide is N-succinyl-L-Arg/Lys racemase (Bacillus cereus (strain ATCC 14579 / DSM 31 / CCUG 7414 / JCM 2152 / NBRC 15305 / NCIMB 9373 / NCTC 2599 / NRRL B-3711)).